Reading from the N-terminus, the 317-residue chain is Endochitinase 3 (317 aa).

The first 19 residues, 1-19, serve as a signal peptide directing secretion; sequence MFVRNALVVTGLLAALTQA. N-linked (GlcNAc...) asparagine glycosylation is found at asparagine 25, asparagine 49, and asparagine 169. In terms of domain architecture, GH18 spans 29–317; that stretch reads HKLTVYWGAE…NYQKEIKANL (289 aa). Glutamate 170 acts as the Proton donor in catalysis. An N-linked (GlcNAc...) asparagine glycan is attached at asparagine 245.

It belongs to the glycosyl hydrolase 18 family. Chitinase class III subfamily.

The protein localises to the secreted. It carries out the reaction Random endo-hydrolysis of N-acetyl-beta-D-glucosaminide (1-&gt;4)-beta-linkages in chitin and chitodextrins.. In terms of biological role, secreted chitinase involved in the degradation of chitin, a component of the cell walls of fungi and exoskeletal elements of some animals (including worms and arthropods). Participates in the infection process and directly acts in the penetration process of the host cuticle. Involved in heat-shock adaptation. This is Endochitinase 3 (chi3) from Metarhizium robertsii (strain ARSEF 23 / ATCC MYA-3075) (Metarhizium anisopliae (strain ARSEF 23)).